Here is a 281-residue protein sequence, read N- to C-terminus: ATP phosphoribosyltransferase (281 aa).

This sequence belongs to the ATP phosphoribosyltransferase family. Long subfamily. It depends on Mg(2+) as a cofactor.

The protein localises to the cytoplasm. It carries out the reaction 1-(5-phospho-beta-D-ribosyl)-ATP + diphosphate = 5-phospho-alpha-D-ribose 1-diphosphate + ATP. It functions in the pathway amino-acid biosynthesis; L-histidine biosynthesis; L-histidine from 5-phospho-alpha-D-ribose 1-diphosphate: step 1/9. Its activity is regulated as follows. Feedback inhibited by histidine. In terms of biological role, catalyzes the condensation of ATP and 5-phosphoribose 1-diphosphate to form N'-(5'-phosphoribosyl)-ATP (PR-ATP). Has a crucial role in the pathway because the rate of histidine biosynthesis seems to be controlled primarily by regulation of HisG enzymatic activity. The protein is ATP phosphoribosyltransferase of Corynebacterium aurimucosum (strain ATCC 700975 / DSM 44827 / CIP 107346 / CN-1) (Corynebacterium nigricans).